The chain runs to 160 residues: Baculoviral IAP repeat-containing protein 5.1-B (160 aa).

Residues 13-83 (QRLQDFRNMY…EGWEPDDDPW (71 aa)) form a BIR repeat. A Phosphothreonine; by CDK1 modification is found at Thr-43. 4 residues coordinate Zn(2+): Cys-66, Cys-69, His-86, and Cys-93.

This sequence belongs to the IAP family. As to quaternary structure, component of the CPC at least composed of survivin/birc5, incenp, cdca8/borealin and/or cdca9/dasra-A, and aurkb/aurora-B. Interacts directly with incenp (via N-terminus), and may weakly interact with aurkb (via N-terminus) to stabilize the complex. Interacts with GTP-bound ran in both the S and M phases of the cell cycle. Also found in a complex with ubiquitin-mediated signaling proteins including at least usp9x/xFAM, nploc4/npl4 and ufd1. Ubiquitination is required for centrosome-targeting.

The protein localises to the cytoplasm. It is found in the nucleus. It localises to the chromosome. Its subcellular location is the centromere. The protein resides in the cytoskeleton. The protein localises to the spindle. Its function is as follows. Component of the chromosomal passenger complex (CPC), a complex that acts as a key regulator of mitosis. The CPC complex has essential functions at the centromere in ensuring correct chromosome alignment and segregation and is required for chromatin-induced microtubule stabilization and spindle assembly. Stimulates the mitotic kinase activity of aurkb/aurora-B in the CPC. Does not appear to exhibit anti-apoptotic activity. CPC. Does not appear to exhibit anti-apoptotic activity. This chain is Baculoviral IAP repeat-containing protein 5.1-B (birc5.1-b), found in Xenopus laevis (African clawed frog).